The sequence spans 210 residues: Ovomucoid (210 aa).

Positions 1 to 24 (MAMAGVFVLFSFVLCGFLPDAAFG) are cleaved as a signal peptide. Kazal-like domains lie at 25 to 88 (AEVD…ECKE), 89 to 153 (TVPM…GCRK), and 156 to 210 (AAVS…FGKC). 3 cysteine pairs are disulfide-bonded: Cys-29–Cys-68, Cys-46–Cys-65, and Cys-54–Cys-86. An N-linked (GlcNAc...) asparagine glycan is attached at Asn-34. N-linked (GlcNAc...) asparagine glycosylation is found at Asn-77, Asn-93, and Asn-99. 6 disulfides stabilise this stretch: Cys-94–Cys-133, Cys-111–Cys-130, Cys-119–Cys-151, Cys-162–Cys-192, Cys-170–Cys-189, and Cys-178–Cys-210. A glycan (N-linked (GlcNAc...) asparagine; partial) is linked at Asn-199.

The protein localises to the secreted. Functionally, serine protease inhibitor. Inhibits trypsin. The protein is Ovomucoid of Gallus gallus (Chicken).